The following is a 151-amino-acid chain: Phosphopantetheine adenylyltransferase (151 aa).

Threonine 9 lines the substrate pocket. ATP-binding positions include 9-10 (TF) and histidine 17. Residues lysine 41, threonine 73, and arginine 87 each contribute to the substrate site. ATP-binding positions include 88 to 90 (GIR), glutamate 98, and 122 to 128 (LTSISST).

This sequence belongs to the bacterial CoaD family. Homohexamer. Mg(2+) is required as a cofactor.

It localises to the cytoplasm. It catalyses the reaction (R)-4'-phosphopantetheine + ATP + H(+) = 3'-dephospho-CoA + diphosphate. It functions in the pathway cofactor biosynthesis; coenzyme A biosynthesis; CoA from (R)-pantothenate: step 4/5. Its function is as follows. Reversibly transfers an adenylyl group from ATP to 4'-phosphopantetheine, yielding dephospho-CoA (dPCoA) and pyrophosphate. This is Phosphopantetheine adenylyltransferase from Phocaeicola vulgatus (strain ATCC 8482 / DSM 1447 / JCM 5826 / CCUG 4940 / NBRC 14291 / NCTC 11154) (Bacteroides vulgatus).